Here is a 79-residue protein sequence, read N- to C-terminus: Sec-independent protein translocase protein TatA (79 aa).

A helical transmembrane segment spans residues 1–21; sequence MGGFTSIWHWVIVLLVIVLLF. Residues 48–79 form a disordered region; it reads EEEAKNEPKTLDAQVTQAKVHESSEIKNKQEG. Residues 66 to 79 show a composition bias toward basic and acidic residues; it reads KVHESSEIKNKQEG.

The protein belongs to the TatA/E family. The Tat system comprises two distinct complexes: a TatABC complex, containing multiple copies of TatA, TatB and TatC subunits, and a separate TatA complex, containing only TatA subunits. Substrates initially bind to the TatABC complex, which probably triggers association of the separate TatA complex to form the active translocon.

The protein localises to the cell inner membrane. Part of the twin-arginine translocation (Tat) system that transports large folded proteins containing a characteristic twin-arginine motif in their signal peptide across membranes. TatA could form the protein-conducting channel of the Tat system. This Helicobacter acinonychis (strain Sheeba) protein is Sec-independent protein translocase protein TatA.